Consider the following 212-residue polypeptide: V-type ATP synthase subunit E (212 aa).

It belongs to the V-ATPase E subunit family.

In terms of biological role, produces ATP from ADP in the presence of a proton gradient across the membrane. This is V-type ATP synthase subunit E from Nitrosococcus oceani (strain ATCC 19707 / BCRC 17464 / JCM 30415 / NCIMB 11848 / C-107).